Reading from the N-terminus, the 443-residue chain is Ribosomal protein uS12 methylthiotransferase RimO (443 aa).

An MTTase N-terminal domain is found at 10-120 (PRVGFVSLGC…VMAAVHAQCP (111 aa)). Residues Cys19, Cys55, Cys84, Cys152, Cys156, and Cys159 each contribute to the [4Fe-4S] cluster site. In terms of domain architecture, Radical SAM core spans 138–375 (LTPRHYAYLK…MALQAEISAR (238 aa)). In terms of domain architecture, TRAM spans 378-443 (ARRVGTECTV…DEHDLYGRVL (66 aa)).

The protein belongs to the methylthiotransferase family. RimO subfamily. Requires [4Fe-4S] cluster as cofactor.

Its subcellular location is the cytoplasm. It catalyses the reaction L-aspartate(89)-[ribosomal protein uS12]-hydrogen + (sulfur carrier)-SH + AH2 + 2 S-adenosyl-L-methionine = 3-methylsulfanyl-L-aspartate(89)-[ribosomal protein uS12]-hydrogen + (sulfur carrier)-H + 5'-deoxyadenosine + L-methionine + A + S-adenosyl-L-homocysteine + 2 H(+). Functionally, catalyzes the methylthiolation of an aspartic acid residue of ribosomal protein uS12. The sequence is that of Ribosomal protein uS12 methylthiotransferase RimO from Alkalilimnicola ehrlichii (strain ATCC BAA-1101 / DSM 17681 / MLHE-1).